The chain runs to 423 residues: Gamma-glutamyl phosphate reductase (423 aa).

The protein belongs to the gamma-glutamyl phosphate reductase family.

It is found in the cytoplasm. The enzyme catalyses L-glutamate 5-semialdehyde + phosphate + NADP(+) = L-glutamyl 5-phosphate + NADPH + H(+). The protein operates within amino-acid biosynthesis; L-proline biosynthesis; L-glutamate 5-semialdehyde from L-glutamate: step 2/2. Its function is as follows. Catalyzes the NADPH-dependent reduction of L-glutamate 5-phosphate into L-glutamate 5-semialdehyde and phosphate. The product spontaneously undergoes cyclization to form 1-pyrroline-5-carboxylate. The sequence is that of Gamma-glutamyl phosphate reductase from Paraburkholderia xenovorans (strain LB400).